Here is a 956-residue protein sequence, read N- to C-terminus: Replication factor C subunit 1 (956 aa).

2 stretches are compositionally biased toward basic and acidic residues: residues methionine 1–glycine 15 and threonine 50–glutamate 74. 2 disordered regions span residues methionine 1–cysteine 206 and lysine 286–lysine 332. Residues arginine 158–methionine 183 are compositionally biased toward gly residues. Composition is skewed to basic and acidic residues over residues glycine 186–proline 200 and serine 288–glutamate 298. The BRCT domain occupies glycine 202–arginine 292. ATP is bound at residue serine 399–lysine 406. Positions leucine 858–arginine 956 are disordered. Residues arginine 866–threonine 892 are compositionally biased toward acidic residues. Residues lysine 916 to lysine 925 are compositionally biased toward low complexity.

The protein belongs to the activator 1 large subunit family. As to quaternary structure, heterotetramer of subunits RFC2, RFC3, RFC4 and RFC5 that can form a complex with RFC1. In terms of tissue distribution, expressed at high levels in flowers and siliques, and at lower levels in roots, stems and leaves.

It localises to the nucleus. Plays a role as mediator of transcriptional gene silencing (TGS), DNA replication, DNA repair, hypersensitive response (HR) and telomere length regulation. Is required in meiosis for DNA double-strand break (DSB) repair during meiotic homologous recombination. May participate in the RAD51-mediated recombination intermediate repair process. Is important for lagging strand synthesis. Promotes meiotic recombination via a specific pathway for crossovers (COs) that involves the formation of double Holliday Junction (dHJ) intermediates. This is Replication factor C subunit 1 (RFC1) from Arabidopsis thaliana (Mouse-ear cress).